The sequence spans 535 residues: Alpha-1,3-mannosyl-glycoprotein 4-beta-N-acetylglucosaminyltransferase A (535 aa).

Topologically, residues 1-6 are cytoplasmic; the sequence is MRLRNG. Residues 7–27 traverse the membrane as a helical; Signal-anchor for type II membrane protein segment; that stretch reads TVATVLVFITTFLSLSWYTAW. Residues 28–54 adopt a coiled-coil conformation; that stretch reads QNGKEKLIAYQREFHALKERLRIAEHR. The Lumenal segment spans residues 28-535; it reads QNGKEKLIAY…NEIHIKKMTN (508 aa). N-linked (GlcNAc...) asparagine glycans are attached at residues Asn-77, Asn-85, and Asn-458.

It belongs to the glycosyltransferase 54 family. The cofactor is a divalent metal cation. N-glycosylated.

It is found in the golgi apparatus membrane. The protein localises to the secreted. It catalyses the reaction N(4)-{beta-D-GlcNAc-(1-&gt;2)-alpha-D-Man-(1-&gt;3)-[beta-D-GlcNAc-(1-&gt;2)-alpha-D-Man-(1-&gt;6)]-beta-D-Man-(1-&gt;4)-beta-D-GlcNAc-(1-&gt;4)-beta-D-GlcNAc}-L-asparaginyl-[protein] + UDP-N-acetyl-alpha-D-glucosamine = N(4)-{beta-D-GlcNAc-(1-&gt;2)-[beta-D-GlcNAc-(1-&gt;4)]-alpha-D-Man-(1-&gt;3)-[beta-D-GlcNAc-(1-&gt;2)-alpha-D-Man-(1-&gt;6)]-beta-D-Man-(1-&gt;4)-beta-D-GlcNAc-(1-&gt;4)-beta-D-GlcNAc}-L-asparaginyl-[protein] + UDP + H(+). The enzyme catalyses an N(4)-{beta-D-GlcNAc-(1-&gt;2)-alpha-D-Man-(1-&gt;3)-[alpha-D-Man-(1-&gt;6)]-beta-D-Man-(1-&gt;4)-beta-D-GlcNAc-(1-&gt;4)-beta-D-GlcNAc}-L-asparaginyl-[protein] + UDP-N-acetyl-alpha-D-glucosamine = an N(4)-{beta-D-GlcNAc-(1-&gt;2)-[beta-D-GlcNAc-(1-&gt;4)]-alpha-D-Man-(1-&gt;3)-[alpha-D-Man-(1-&gt;6)]-beta-D-Man-(1-&gt;4)-beta-D-GlcNAc-(1-&gt;4)-beta-D-GlcNAc}-L-asparaginyl-[protein] + UDP + H(+). The catalysed reaction is an N(4)-{beta-D-GlcNAc-(1-&gt;2)-alpha-D-Man-(1-&gt;3)-[beta-D-GlcNAc-(1-&gt;2)-[beta-D-GlcNAc-(1-&gt;6)]-alpha-D-Man-(1-&gt;6)]-beta-D-Man-(1-&gt;4)-beta-D-GlcNAc-(1-&gt;4)-beta-D-GlcNAc}-L-asparaginyl-[protein] + UDP-N-acetyl-alpha-D-glucosamine = an N(4)-{beta-D-GlcNAc-(1-&gt;2)-[beta-D-GlcNAc-(1-&gt;4)]-alpha-D-Man-(1-&gt;3)-[beta-D-GlcNAc-(1-&gt;2)-[beta-D-GlcNAc-(1-&gt;6)]-alpha-D-Man-(1-&gt;6)]-beta-D-Man-(1-&gt;4)-beta-D-GlcNAc-(1-&gt;4)-beta-D-GlcNAc}-L-asparaginyl-[protein] + UDP + H(+). It carries out the reaction an N(4)-{beta-D-GlcNAc-(1-&gt;2)-alpha-D-Man-(1-&gt;3)-[beta-D-GlcNAc-(1-&gt;2)-alpha-D-Man-(1-&gt;6)]-beta-D-Man-(1-&gt;4)-beta-D-GlcNAc-(1-&gt;4)-[alpha-L-Fuc-(1-&gt;6)]-beta-D-GlcNAc}-L-asparaginyl-[protein] + UDP-N-acetyl-alpha-D-glucosamine = N(4)-{beta-D-GlcNAc-(1-&gt;2)-[beta-D-GlcNAc-(1-&gt;4)]-alpha-D-Man-(1-&gt;3)-[beta-D-GlcNAc-(1-&gt;2)-alpha-D-Man-(1-&gt;6)]-beta-D-Man-(1-&gt;4)-beta-D-GlcNAc-(1-&gt;4)-[alpha-L-Fuc-(1-&gt;6)]-beta-D-GlcNAc}-asparaginyl-[protein] + UDP + H(+). It catalyses the reaction an N(4)-{beta-D-GlcNAc-(1-&gt;2)-alpha-D-Man-(1-&gt;3)-[beta-D-Gal-(1-&gt;4)-beta-D-GlcNAc-(1-&gt;2)-alpha-D-Man-(1-&gt;6)]-beta-D-Man-(1-&gt;4)-beta-D-GlcNAc-(1-&gt;4)-beta-D-GlcNAc}-L-asparaginyl-[protein] + UDP-N-acetyl-alpha-D-glucosamine = an N(4)-{beta-D-GlcNAc-(1-&gt;2)-[beta-D-GlcNAc-(1-&gt;4)]-alpha-D-Man-(1-&gt;3)-[beta-D-Gal-(1-&gt;4)-beta-D-GlcNAc-(1-&gt;2)-alpha-D-Man-(1-&gt;6)]-beta-D-Man-(1-&gt;4)-beta-D-GlcNAc-(1-&gt;4)-beta-D-GlcNAc}-L-asparaginyl-[protein] + UDP + H(+). The enzyme catalyses N(4)-{beta-D-GlcNAc-(1-&gt;2)-alpha-D-Man-(1-&gt;3)-[alpha-D-Man-(1-&gt;3)-{alpha-D-Man-(1-&gt;6)}-alpha-D-Man-(1-&gt;6)]-beta-D-Man-(1-&gt;4)-beta-D-GlcNAc-(1-&gt;4)-beta-D-GlcNAc}-asparaginyl-[protein] + UDP-N-acetyl-alpha-D-glucosamine = N(4)-{beta-D-GlcNAc-(1-&gt;2)-[beta-D-GlcNAc-(1-&gt;4)]-alpha-D-Man-(1-&gt;3)-[alpha-D-Man-(1-&gt;3)-{alpha-D-Man-(1-&gt;6)}-alpha-D-Man-(1-&gt;6)]-beta-D-Man-(1-&gt;4)-beta-D-GlcNAc-(1-&gt;4)-beta-D-GlcNAc}-asparaginyl-[protein] + UDP + H(+). The catalysed reaction is N(4)-{beta-D-GlcNAc-(1-&gt;2)-alpha-D-Man-(1-&gt;3)-beta-D-Man-(1-&gt;4)-beta-D-GlcNAc-(1-&gt;4)-beta-D-GlcNAc}-asparaginyl-[protein] + UDP-N-acetyl-alpha-D-glucosamine = N(4)-{beta-D-GlcNAc-(1-&gt;2)-[beta-D-GlcNAc-(1-&gt;4)]-alpha-D-Man-(1-&gt;3)-beta-D-Man-(1-&gt;4)-beta-D-GlcNAc-(1-&gt;4)-beta-D-GlcNAc}-asparaginyl-[protein] + UDP + H(+). The protein operates within protein modification; protein glycosylation. Its activity is regulated as follows. Inhibited by UDP. Its function is as follows. Glycosyltransferase that catalyze the transfer of GlcNAc from UDP-GlcNAc to the GlcNAcbeta1-2Manalpha1-3 arm of the core structure of N-linked glycans through a beta1-4 linkage and participates in the production of tri- and tetra-antennary N-linked sugar chains. Involved in glucose transport by mediating SLC2A2/GLUT2 glycosylation, thereby controlling cell-surface expression of SLC2A2 in pancreatic beta cells. The protein is Alpha-1,3-mannosyl-glycoprotein 4-beta-N-acetylglucosaminyltransferase A of Gallus gallus (Chicken).